A 126-amino-acid chain; its full sequence is Large ribosomal subunit protein bL21 (126 aa).

The disordered stretch occupies residues 105–126; that stretch reads KKPSVGPRAKRTKAAPAAEAAE.

In terms of assembly, contacts protein L20. Part of the 50S ribosomal subunit.

This protein binds to 23S rRNA in the presence of protein L20. This is Large ribosomal subunit protein bL21 from Rhodopseudomonas palustris (strain ATCC BAA-98 / CGA009).